A 571-amino-acid polypeptide reads, in one-letter code: DNA primase (571 aa).

The segment at 20–44 (CPFHKEKTPSFQVDTEKGYYHCFGC) adopts a CHC2-type zinc-finger fold. Positions 229–309 (AELVVVEGYM…KFRVRATSVP (81 aa)) constitute a Toprim domain. Residues E235, D280, and D282 each contribute to the Mg(2+) site.

The protein belongs to the DnaG primase family. As to quaternary structure, monomer. Interacts with DnaB. Requires Zn(2+) as cofactor. Mg(2+) is required as a cofactor.

It catalyses the reaction ssDNA + n NTP = ssDNA/pppN(pN)n-1 hybrid + (n-1) diphosphate.. Its function is as follows. RNA polymerase that catalyzes the synthesis of short RNA molecules used as primers for DNA polymerase during DNA replication. This is DNA primase from Deinococcus radiodurans (strain ATCC 13939 / DSM 20539 / JCM 16871 / CCUG 27074 / LMG 4051 / NBRC 15346 / NCIMB 9279 / VKM B-1422 / R1).